The following is a 318-amino-acid chain: Cell surface sensor SHO1 (318 aa).

A disordered region spans residues 1–23; the sequence is MPSYGSLHSPSLRKMEHSRGQYG. Topologically, residues 1–38 are cytoplasmic; the sequence is MPSYGSLHSPSLRKMEHSRGQYGGGRKGMSLGNVIGDP. Residues 39–59 traverse the membrane as a helical segment; the sequence is FALATISIAGLAWLIAFIASI. Over 60–71 the chain is Extracellular; that stretch reads VAQIQTTQGFPT. Residues 72-92 traverse the membrane as a helical segment; it reads YTWWTVVFYFFLIPGVFVVVA. The Cytoplasmic portion of the chain corresponds to 93 to 100; it reads SDTIQTYH. The chain crosses the membrane as a helical span at residues 101–121; it reads VALVGYMACGLVLTTSSVNGL. The Extracellular segment spans residues 122 to 130; it reads VYSTNGAKE. A helical transmembrane segment spans residues 131–151; it reads AAAAGFILLSMVTIVWIFYFG. Over 152 to 318 the chain is Cytoplasmic; sequence SAPSAMPRAY…IAPSNYLILL (167 aa). The interval 172 to 255 is disordered; it reads TSNNRQTMTG…AGGAADAEIV (84 aa). Residues 190 to 214 show a composition bias toward polar residues; the sequence is ETSTSVQPPQMYTSAQLNGFENPSP. Positions 237-250 are enriched in low complexity; the sequence is GLPKTTTPPAGGAA. Residues 259–318 enclose the SH3 domain; the sequence is EYPYRAKAIYTYEANPDDANEISFSKHEILEVSDVSGRWWQARKETGETGIAPSNYLILL.

Belongs to the SHO1 family. In terms of assembly, forms homooligomers.

It localises to the cell membrane. In terms of biological role, MSB2 and SHO1 have overlapping functions in recognizing various surface signals for MAPK PMK1 activation and appressorium formation. While MSB2 is critical for sensing surface hydrophobicity and cutin monomers, SHO1 may play a more important role in recognizing rice leaf waxes. The polypeptide is Cell surface sensor SHO1 (Pyricularia oryzae (strain 70-15 / ATCC MYA-4617 / FGSC 8958) (Rice blast fungus)).